A 168-amino-acid polypeptide reads, in one-letter code: Mediator of RNA polymerase II transcription subunit 7a (168 aa).

Coiled coils occupy residues 64-92 (KDSN…ADVL) and 132-166 (IMEL…LTLD).

This sequence belongs to the Mediator complex subunit 7 family. As to quaternary structure, component of the Mediator complex. Interacts with MEE14/CBP1.

Its subcellular location is the nucleus. Functionally, component of the Mediator complex, a coactivator involved in the regulated transcription of nearly all RNA polymerase II-dependent genes. Mediator functions as a bridge to convey information from gene-specific regulatory proteins to the basal RNA polymerase II transcription machinery. The Mediator complex, having a compact conformation in its free form, is recruited to promoters by direct interactions with regulatory proteins and serves for the assembly of a functional pre-initiation complex with RNA polymerase II and the general transcription factors. In Arabidopsis thaliana (Mouse-ear cress), this protein is Mediator of RNA polymerase II transcription subunit 7a (MED7A).